Reading from the N-terminus, the 194-residue chain is Imidazoleglycerol-phosphate dehydratase (194 aa).

The protein belongs to the imidazoleglycerol-phosphate dehydratase family.

It is found in the cytoplasm. It carries out the reaction D-erythro-1-(imidazol-4-yl)glycerol 3-phosphate = 3-(imidazol-4-yl)-2-oxopropyl phosphate + H2O. It functions in the pathway amino-acid biosynthesis; L-histidine biosynthesis; L-histidine from 5-phospho-alpha-D-ribose 1-diphosphate: step 6/9. This chain is Imidazoleglycerol-phosphate dehydratase, found in Bacillus velezensis (strain DSM 23117 / BGSC 10A6 / LMG 26770 / FZB42) (Bacillus amyloliquefaciens subsp. plantarum).